Consider the following 624-residue polypeptide: DNA-directed RNA polymerase subunit gamma (624 aa).

Zn(2+) is bound by residues Cys-70, Cys-72, Cys-85, and Cys-88. Positions 466, 468, and 470 each coordinate Mg(2+).

The protein belongs to the RNA polymerase beta' chain family. RpoC1 subfamily. In cyanobacteria the RNAP catalytic core is composed of 2 alpha, 1 beta, 1 beta', 1 gamma and 1 omega subunit. When a sigma factor is associated with the core the holoenzyme is formed, which can initiate transcription. Mg(2+) serves as cofactor. It depends on Zn(2+) as a cofactor.

The catalysed reaction is RNA(n) + a ribonucleoside 5'-triphosphate = RNA(n+1) + diphosphate. DNA-dependent RNA polymerase catalyzes the transcription of DNA into RNA using the four ribonucleoside triphosphates as substrates. In Synechococcus sp. (strain ATCC 27144 / PCC 6301 / SAUG 1402/1) (Anacystis nidulans), this protein is DNA-directed RNA polymerase subunit gamma.